The chain runs to 430 residues: MRNYVEIVDVTARQILDSRANPTVEVEVILEDGTEGRAAVPSGASTGAFEAVELRDEDKEKYMGKGVLKAVENVNNYIAEELIGMNVFDQVLIDKTMLELDGTHNKGKLGANATLGVSLACARAAAKYLGLSLYQYIGGVNAKVLPVPMMNIVNGGKHADNNVDLQEFMIMPVGAPSFTEALRMSSEVYHTLKSLLKSKGQDTGVGDEGGFAPNLNSNEEAIQIIVEAVEKAGYVPGKDIFIALDPASTEIYEDGKYNLKSEGKVLSSEEMVDYYVTLVNKYPIISIEDAMAEEDWEGWSILTEKLGDKVQLVGDDLFVTNTERLKKGIDKKVANSILIKLNQIGTLTETLNAIEMAERAGYTAVVSHRSGETEDTTIADLVVAVNAGQIKTGAPARSERVAKYNQLLRIEEELGETAEYRGLNTFYNIK.

Gln166 contributes to the (2R)-2-phosphoglycerate binding site. Glu208 serves as the catalytic Proton donor. Residues Asp245, Glu288, and Asp315 each contribute to the Mg(2+) site. (2R)-2-phosphoglycerate contacts are provided by Lys340, Arg369, Ser370, and Lys391. Catalysis depends on Lys340, which acts as the Proton acceptor.

It belongs to the enolase family. Mg(2+) is required as a cofactor.

Its subcellular location is the cytoplasm. The protein resides in the secreted. It is found in the cell surface. It carries out the reaction (2R)-2-phosphoglycerate = phosphoenolpyruvate + H2O. Its pathway is carbohydrate degradation; glycolysis; pyruvate from D-glyceraldehyde 3-phosphate: step 4/5. Catalyzes the reversible conversion of 2-phosphoglycerate (2-PG) into phosphoenolpyruvate (PEP). It is essential for the degradation of carbohydrates via glycolysis. The sequence is that of Enolase from Clostridium kluyveri (strain NBRC 12016).